Here is a 241-residue protein sequence, read N- to C-terminus: Phosphoribosylaminoimidazole-succinocarboxamide synthase (241 aa).

Belongs to the SAICAR synthetase family.

The catalysed reaction is 5-amino-1-(5-phospho-D-ribosyl)imidazole-4-carboxylate + L-aspartate + ATP = (2S)-2-[5-amino-1-(5-phospho-beta-D-ribosyl)imidazole-4-carboxamido]succinate + ADP + phosphate + 2 H(+). The protein operates within purine metabolism; IMP biosynthesis via de novo pathway; 5-amino-1-(5-phospho-D-ribosyl)imidazole-4-carboxamide from 5-amino-1-(5-phospho-D-ribosyl)imidazole-4-carboxylate: step 1/2. The protein is Phosphoribosylaminoimidazole-succinocarboxamide synthase of Lacticaseibacillus paracasei (strain ATCC 334 / BCRC 17002 / CCUG 31169 / CIP 107868 / KCTC 3260 / NRRL B-441) (Lactobacillus paracasei).